A 335-amino-acid polypeptide reads, in one-letter code: uncharacterized protein (335 aa).

This is an uncharacterized protein from Escherichia coli (strain K12).